Reading from the N-terminus, the 392-residue chain is Nucleosome assembly protein 1-like 1-A (392 aa).

Residues 1–37 (MANIDNKGQTELDQQDMEDVEDVEEEETGEDANSKAR) form a disordered region. Over residues 13–30 (DQQDMEDVEDVEEEETGE) the composition is skewed to acidic residues. Positions 126–150 (YEPTEEECEWKVEEEDISGDLKEKA) match the NAP1L motif motif. Positions 273–279 (IKKKQKH) match the Nuclear localization signal motif. The segment covering 346–377 (AIEDDDDDYDEEGEEADDEEGEEEADEDNDPD) has biased composition (acidic residues). Residues 346–392 (AIEDDDDDYDEEGEEADDEEGEEEADEDNDPDYEPKKGQNPAECKQQ) are disordered.

It belongs to the nucleosome assembly protein (NAP) family. In terms of assembly, forms homomultimers. Interacts with histone B4. Interacts with the B-type cyclins ccnb1 and ccnb2. Post-translationally, phosphorylated by cyclin B-cdc2 kinase complexes. Initially expressed throughout the embryo with expression higher at the animal pole. Becomes localized to presumptive ectoderm by gastrula stages. By stage 18 (neurula), expressed in the neural plate and posterior to the cement gland. In late neurula/early tailbud stages, expressed in the neural crest, neural tube, eyes, tailbud and ventral blood islands. Adult expression is predominantly in ovaries.

Its subcellular location is the cytoplasm. It is found in the nucleus. Functionally, acts as a chaperone for the linker histone to facilitate deposition of histone B4 onto linker DNA. Required for both remodeling of sperm chromatin into nucleosomes, and linker histone binding to nucleosome core dimers. Plays a role in tissue-specific gene regulation. Required for primitive hemopoiesis, acting upstream of tal1/scl. The protein is Nucleosome assembly protein 1-like 1-A (nap1l1-a) of Xenopus laevis (African clawed frog).